A 179-amino-acid chain; its full sequence is MSNFIDKTFTVIADILLKVLPASKQEKQAFSYYRAGMSAQSEGKYAEALENYYEALQLEEDPYDRSYTLYNIGLIYGNNGNYSQALEYYHQALELNSNLPQALNNIAVIYHSQGLNALQMQNQDKNLEIRNDEYLELAKEFFDKAAEYWRQALKLAPDNYPGAQNWLKVTGRQISEEYF.

TPR repeat units follow at residues 29 to 62 (AFSYYRAGMSAQSEGKYAEALENYYEALQLEEDP), 66 to 99 (SYTLYNIGLIYGNNGNYSQALEYYHQALELNSNL), and 126 to 159 (NLEIRNDEYLELAKEFFDKAAEYWRQALKLAPDN).

The protein belongs to the Ycf3 family.

It is found in the plastid. The protein resides in the chloroplast thylakoid membrane. In terms of biological role, essential for the assembly of the photosystem I (PSI) complex. May act as a chaperone-like factor to guide the assembly of the PSI subunits. In Trieres chinensis (Marine centric diatom), this protein is Photosystem I assembly protein Ycf3.